The primary structure comprises 301 residues: Immediate early response gene 5-like protein (301 aa).

Belongs to the IER family.

The sequence is that of Immediate early response gene 5-like protein (ier5l) from Danio rerio (Zebrafish).